A 391-amino-acid chain; its full sequence is MEFPETNNNPIITLSFLLCMLSLAYASETCDFPAIFNFGDSNSDTGGKAAAFYPLNPPYGETFFHRSTGRYSDGRLIIDFIAESFNLPYLSPYLSSLGSNFKHGADFATAGSTIKLPTTIIPAHGGFSPFYLDVQYSQFRQFIPRSQFIRETGGIFAELVPEEYYFEKALYTFDIGQNDLTEGFLNLTVEEVNATVPDLVNSFSANVKKIYDLGARTFWIHNTGPIGCLSFILTYFPWAEKDSAGCAKAYNEVAQHFNHKLKEIVAQLRKDLPLATFVHVDIYSVKYSLFSEPEKHGFEFPLITCCGYGGKYNFSVTAPCGDTVTADDGTKIVVGSCACPSVRVNWDGAHYTEAANEYFFDQISTGAFSDPPVPLNMACHKTESLRTLASV.

The first 26 residues, 1 to 26 (MEFPETNNNPIITLSFLLCMLSLAYA), serve as a signal peptide directing secretion. Ser41 serves as the catalytic Nucleophile. Asn186, Asn193, and Asn313 each carry an N-linked (GlcNAc...) asparagine glycan. Residues Asp347 and His350 contribute to the active site.

The protein belongs to the 'GDSL' lipolytic enzyme family. In terms of processing, the N-terminus is blocked. Post-translationally, glycosylated.

In terms of biological role, has lipase and esterase activities. May be involved in plant defense. This Hevea brasiliensis (Para rubber tree) protein is Esterase.